We begin with the raw amino-acid sequence, 60 residues long: Conotoxin Cl1.1 (60 aa).

The N-terminal stretch at 1–19 (MRCLPVIVILLLLISSAAA) is a signal peptide. A propeptide spanning residues 20–48 (VVEGPLRVNRRLRPRKAPVDMQARDWNWG) is cleaved from the precursor.

It belongs to the conotoxin T superfamily. Post-translationally, contains 2 disulfide bonds. Expressed by the venom duct.

Its subcellular location is the secreted. The protein is Conotoxin Cl1.1 of Californiconus californicus (California cone).